A 1212-amino-acid chain; its full sequence is DNA-directed RNA polymerase subunit beta'' (1212 aa).

Positions 229, 302, 309, and 312 each coordinate Zn(2+). A disordered region spans residues 1162-1212 (QKETSKNKKETSKNKKETSKNKKETSKNKKETSKNKKETSKNKKEASKNKK).

This sequence belongs to the RNA polymerase beta' chain family. RpoC2 subfamily. In plastids the minimal PEP RNA polymerase catalytic core is composed of four subunits: alpha, beta, beta', and beta''. When a (nuclear-encoded) sigma factor is associated with the core the holoenzyme is formed, which can initiate transcription. Zn(2+) serves as cofactor.

It localises to the plastid. The protein localises to the chloroplast. It carries out the reaction RNA(n) + a ribonucleoside 5'-triphosphate = RNA(n+1) + diphosphate. Its function is as follows. DNA-dependent RNA polymerase catalyzes the transcription of DNA into RNA using the four ribonucleoside triphosphates as substrates. The protein is DNA-directed RNA polymerase subunit beta'' of Cryptomeria japonica (Japanese cedar).